A 315-amino-acid chain; its full sequence is Microtubule-associated protein Jupiter (315 aa).

Residues 1 to 14 (MISNFDCTDNQASS) are compositionally biased toward polar residues. Disordered stretches follow at residues 1–37 (MISN…QTPR) and 51–89 (EKDN…PGKN). Serine 24 bears the Phosphoserine mark. Threonine 35 bears the Phosphothreonine mark. Basic and acidic residues predominate over residues 62–76 (APRRGQKTVDSHSRL). Phosphothreonine occurs at positions 81 and 85. A phosphoserine mark is found at serine 94, serine 122, and serine 133. Disordered stretches follow at residues 116-166 (YNGK…ADDA) and 272-315 (EGNP…SGLW). A compositionally biased stretch (low complexity) spans 120–133 (SGSVSSASSSVSSS). Composition is skewed to polar residues over residues 134-148 (TENL…SVFR) and 285-296 (DFTQRQESSNGG).

Belongs to the MAP Jupiter family.

Its subcellular location is the nucleus. The protein localises to the cytoplasm. It is found in the cytoskeleton. The protein resides in the spindle. In terms of biological role, binds to all microtubule populations. In Drosophila sechellia (Fruit fly), this protein is Microtubule-associated protein Jupiter.